The following is a 51-amino-acid chain: Large ribosomal subunit protein eL39 (51 aa).

Belongs to the eukaryotic ribosomal protein eL39 family.

This is Large ribosomal subunit protein eL39 from Methanobrevibacter smithii (strain ATCC 35061 / DSM 861 / OCM 144 / PS).